The primary structure comprises 156 residues: ATP synthase subunit b 2 (156 aa).

The chain crosses the membrane as a helical span at residues 6–26 (SMFGQAISFVIFVWLCMKYVW).

Belongs to the ATPase B chain family. As to quaternary structure, F-type ATPases have 2 components, F(1) - the catalytic core - and F(0) - the membrane proton channel. F(1) has five subunits: alpha(3), beta(3), gamma(1), delta(1), epsilon(1). F(0) has three main subunits: a(1), b(2) and c(10-14). The alpha and beta chains form an alternating ring which encloses part of the gamma chain. F(1) is attached to F(0) by a central stalk formed by the gamma and epsilon chains, while a peripheral stalk is formed by the delta and b chains.

Its subcellular location is the cell inner membrane. Its function is as follows. F(1)F(0) ATP synthase produces ATP from ADP in the presence of a proton or sodium gradient. F-type ATPases consist of two structural domains, F(1) containing the extramembraneous catalytic core and F(0) containing the membrane proton channel, linked together by a central stalk and a peripheral stalk. During catalysis, ATP synthesis in the catalytic domain of F(1) is coupled via a rotary mechanism of the central stalk subunits to proton translocation. Component of the F(0) channel, it forms part of the peripheral stalk, linking F(1) to F(0). This chain is ATP synthase subunit b 2, found in Vibrio campbellii (strain ATCC BAA-1116).